A 36-amino-acid polypeptide reads, in one-letter code: Potassium channel toxin alpha-KTx 6.14 (36 aa).

Disulfide bonds link Cys5-Cys25, Cys11-Cys30, Cys15-Cys32, and Cys20-Cys35.

Expressed by the venom gland.

The protein resides in the secreted. Its function is as follows. Blocks Shaker B channels expressed in Sf9 cells, with a dissociation constant of 52 nM. This is Potassium channel toxin alpha-KTx 6.14 from Hoffmannihadrurus gertschi (Scorpion).